A 459-amino-acid chain; its full sequence is tRNA modification GTPase MnmE (459 aa).

(6S)-5-formyl-5,6,7,8-tetrahydrofolate contacts are provided by R23, E86, and R125. In terms of domain architecture, TrmE-type G spans 221-380 (GIDAVIIGKP…LENAITELFV (160 aa)). N231 lines the K(+) pocket. GTP-binding positions include 231–236 (NVGKSS), 250–256 (TDIPGTT), and 275–278 (DTAG). S235 provides a ligand contact to Mg(2+). Residues T250, I252, and T255 each contribute to the K(+) site. T256 is a binding site for Mg(2+). (6S)-5-formyl-5,6,7,8-tetrahydrofolate is bound at residue K459.

This sequence belongs to the TRAFAC class TrmE-Era-EngA-EngB-Septin-like GTPase superfamily. TrmE GTPase family. In terms of assembly, homodimer. Heterotetramer of two MnmE and two MnmG subunits. K(+) serves as cofactor.

Its subcellular location is the cytoplasm. Its function is as follows. Exhibits a very high intrinsic GTPase hydrolysis rate. Involved in the addition of a carboxymethylaminomethyl (cmnm) group at the wobble position (U34) of certain tRNAs, forming tRNA-cmnm(5)s(2)U34. The protein is tRNA modification GTPase MnmE of Acetivibrio thermocellus (strain ATCC 27405 / DSM 1237 / JCM 9322 / NBRC 103400 / NCIMB 10682 / NRRL B-4536 / VPI 7372) (Clostridium thermocellum).